We begin with the raw amino-acid sequence, 220 residues long: uncharacterized protein (220 aa).

The chain crosses the membrane as a helical span at residues 20-42; the sequence is FFKKLVPIIIIISIVVITIMVII.

It localises to the membrane. This is an uncharacterized protein from Rickettsia prowazekii (strain Madrid E).